Consider the following 896-residue polypeptide: MSDNRLDTARRHSLFLARQLDNGKLKPEIFLPMLDKVLTEADFQAFADWGEIRAEENEEELARQLRELRRYVVSQIIVRDINRISDLNEVTRTITLFADFAVNTALDFAYAYYRDMYGTPIGRYTKSPQHLSVVAMGKAGGYELNVSSDIDLIFVYPESGDTDGRRERGNQEFFTKVGQKLIALLNDITADGQVFRVDMRLRPDGDSGALVLSETALEQYLITQGREWERYAWCKGRVVTPYPNDIKALVRPFVFRKYLDYGAYEAMRKLHRQISSEVSKKGMADNIKLGAGGIREVEFIAQIFQMIRGGQMRALQLKGTQETLKKLAELGIMLSEHVETLLAAYRFLRDVEHRLQYWDDQQTQTLPTSPEQRQLLAESMGFDSYSAFSDGLNVHRNKVNQLFNEILSEPEEQTQDNSEWQWAWQDKPDEEGRRCRLKAHGFDAETVAARLDQIRHGHKYRHLSAHAQPRFDAVVPLFVQAAAAQSNPTDTLMRLLDFLENISRRSAYLAFLNEHPQTLAQLAQIMGQSSWVAAYLNKYPILLDELISAQLLDTAFDWQALAAALSDDLKACGGDTEAQMDTLRRFQHAQVFRLAVQDLAGLWTVESLSDQLSALADTILAAALLCAWADMPKKHRDTPQFAVVGYGKLGGKELGYASDLDLVYLYDDPHPDAGDVYSRLARRLTNWLSAATGAGSLYETDLRLRPNGDAGFLAHSIAAFEKYQRENAWTWEHQSLTRARFICGTSEIQTAFDRIRTEILTAERDQTALAGEIIEMREKMFPTHPPADSNVKYARGGVVDVEFIVQYLILAHARQYPQLLDNYGNIALLNISADCGLIDKTLAGQSRTAYRFYRRQQHNTKLRDAAKTEVTGELLAHYGNVRKLWREVFGEEAATV.

Positions 1–411 (MSDNRLDTAR…LFNEILSEPE (411 aa)) are adenylyl removase. Positions 417 to 896 (NSEWQWAWQD…EVFGEEAATV (480 aa)) are adenylyl transferase.

It belongs to the GlnE family. It depends on Mg(2+) as a cofactor.

It carries out the reaction [glutamine synthetase]-O(4)-(5'-adenylyl)-L-tyrosine + phosphate = [glutamine synthetase]-L-tyrosine + ADP. The catalysed reaction is [glutamine synthetase]-L-tyrosine + ATP = [glutamine synthetase]-O(4)-(5'-adenylyl)-L-tyrosine + diphosphate. Its function is as follows. Involved in the regulation of glutamine synthetase GlnA, a key enzyme in the process to assimilate ammonia. When cellular nitrogen levels are high, the C-terminal adenylyl transferase (AT) inactivates GlnA by covalent transfer of an adenylyl group from ATP to specific tyrosine residue of GlnA, thus reducing its activity. Conversely, when nitrogen levels are low, the N-terminal adenylyl removase (AR) activates GlnA by removing the adenylyl group by phosphorolysis, increasing its activity. The regulatory region of GlnE binds the signal transduction protein PII (GlnB) which indicates the nitrogen status of the cell. The sequence is that of Bifunctional glutamine synthetase adenylyltransferase/adenylyl-removing enzyme from Neisseria meningitidis serogroup B (strain ATCC BAA-335 / MC58).